Reading from the N-terminus, the 944-residue chain is Protein translocase subunit SecA (944 aa).

ATP-binding positions include Gln90, 108–112 (GEGKT), and Asp509. The segment at 533–565 (VKPEEGHKPPVSPQRKTKSAGFKEEKNKNLSIS) is disordered.

The protein belongs to the SecA family. Monomer and homodimer. Part of the essential Sec protein translocation apparatus which comprises SecA, SecYEG and auxiliary proteins SecDF. Other proteins may also be involved.

The protein resides in the cell inner membrane. Its subcellular location is the cellular thylakoid membrane. It localises to the cytoplasm. The catalysed reaction is ATP + H2O + cellular proteinSide 1 = ADP + phosphate + cellular proteinSide 2.. Functionally, part of the Sec protein translocase complex. Interacts with the SecYEG preprotein conducting channel. Has a central role in coupling the hydrolysis of ATP to the transfer of proteins into and across the cell membrane, serving as an ATP-driven molecular motor driving the stepwise translocation of polypeptide chains across the membrane. In terms of biological role, probably participates in protein translocation into and across both the cytoplasmic and thylakoid membranes in cyanobacterial cells. The chain is Protein translocase subunit SecA from Prochlorococcus marinus (strain NATL1A).